A 691-amino-acid chain; its full sequence is Threonine--tRNA ligase (691 aa).

The 69-residue stretch at 1–69 (MSTPEITPAA…QQDVEVAAVP (69 aa)) folds into the TGS domain. A catalytic region spans residues 268–574 (DHRRLGQELD…LLEHYAGAFP (307 aa)). Zn(2+) is bound by residues C373, H424, and H551.

This sequence belongs to the class-II aminoacyl-tRNA synthetase family. As to quaternary structure, homodimer. Zn(2+) is required as a cofactor.

The protein localises to the cytoplasm. It catalyses the reaction tRNA(Thr) + L-threonine + ATP = L-threonyl-tRNA(Thr) + AMP + diphosphate + H(+). Catalyzes the attachment of threonine to tRNA(Thr) in a two-step reaction: L-threonine is first activated by ATP to form Thr-AMP and then transferred to the acceptor end of tRNA(Thr). Also edits incorrectly charged L-seryl-tRNA(Thr). The chain is Threonine--tRNA ligase from Corynebacterium jeikeium (strain K411).